Here is a 149-residue protein sequence, read N- to C-terminus: L-alanine exporter AlaE (149 aa).

4 helical membrane passes run 16-36 (FAMV…LSGM), 46-66 (LVAI…RDLI), 83-105 (ADVL…TVGA), and 115-135 (SSNI…LDYC).

The protein belongs to the AlaE exporter family.

It is found in the cell inner membrane. Its function is as follows. Exports L-alanine. The chain is L-alanine exporter AlaE from Salmonella typhimurium (strain LT2 / SGSC1412 / ATCC 700720).